The chain runs to 335 residues: Ubiquinone biosynthesis protein COQ4, mitochondrial (335 aa).

The N-terminal 10 residues, 1-10, are a transit peptide targeting the mitochondrion; that stretch reads MLRLSLLRST. Zn(2+) is bound by residues His210, Asp211, His214, and Glu226.

The protein belongs to the COQ4 family. As to quaternary structure, component of a multi-subunit COQ enzyme complex, composed of at least COQ3, COQ4, COQ5, COQ6, COQ7 and COQ9. Interacts with COQ3. The cofactor is Zn(2+).

It localises to the mitochondrion inner membrane. It carries out the reaction 4-hydroxy-3-methoxy-5-(all-trans-hexaprenyl)benzoate + H(+) = 2-methoxy-6-(all-trans-hexaprenyl)phenol + CO2. The protein operates within cofactor biosynthesis; ubiquinone biosynthesis. Lyase that catalyzes the C1-decarboxylation of 4-hydroxy-3-methoxy-5-(all-trans-hexaprenyl)benzoic acid into 2-methoxy-6-(all-trans-hexaprenyl)phenol during ubiquinone biosynthesis. The sequence is that of Ubiquinone biosynthesis protein COQ4, mitochondrial from Saccharomyces cerevisiae (strain RM11-1a) (Baker's yeast).